The primary structure comprises 229 residues: uncharacterized protein (229 aa).

Residues Gln-2–Pro-69 form the S4 RNA-binding domain. The Nucleophile role is filled by Asp-102.

It belongs to the pseudouridine synthase RsuA family.

It carries out the reaction a uridine in RNA = a pseudouridine in RNA. This is an uncharacterized protein from Rickettsia felis (strain ATCC VR-1525 / URRWXCal2) (Rickettsia azadi).